Consider the following 315-residue polypeptide: Ribose-phosphate pyrophosphokinase (315 aa).

ATP contacts are provided by residues 37-39 (DGE) and 96-97 (RQ). Residues His131 and Asp171 each contribute to the Mg(2+) site. Residue Lys195 is part of the active site. D-ribose 5-phosphate contacts are provided by residues Arg197, Asp221, and 225–229 (DTGGT).

Belongs to the ribose-phosphate pyrophosphokinase family. Class I subfamily. In terms of assembly, homohexamer. Requires Mg(2+) as cofactor.

The protein localises to the cytoplasm. The enzyme catalyses D-ribose 5-phosphate + ATP = 5-phospho-alpha-D-ribose 1-diphosphate + AMP + H(+). It participates in metabolic intermediate biosynthesis; 5-phospho-alpha-D-ribose 1-diphosphate biosynthesis; 5-phospho-alpha-D-ribose 1-diphosphate from D-ribose 5-phosphate (route I): step 1/1. Involved in the biosynthesis of the central metabolite phospho-alpha-D-ribosyl-1-pyrophosphate (PRPP) via the transfer of pyrophosphoryl group from ATP to 1-hydroxyl of ribose-5-phosphate (Rib-5-P). This is Ribose-phosphate pyrophosphokinase from Pasteurella multocida (strain Pm70).